Here is a 181-residue protein sequence, read N- to C-terminus: MGEKDQLRPKVNVSSYIHFMLNFRNKFKEQQPNTYLGFKEFSRKCSEKWRSISKHEKAKYEALAELDKARYQQEMMNYIGKRRKRRKRDPKAPRKPPSSFLLFSRDHYAMLKQENPDWTVVQVAKAAGKMWSTTDEAEKKPYEQKAALMRAKYFEEQEAYRNQCQGRKGNFLESAKTSLKQ.

The HMG box 1 DNA-binding region spans 9–79; it reads PKVNVSSYIH…RYQQEMMNYI (71 aa). The segment covering 80 to 89 has biased composition (basic residues); that stretch reads GKRRKRRKRD. The interval 80-100 is disordered; sequence GKRRKRRKRDPKAPRKPPSSF. The HMG box 2 DNA-binding region spans 93–161; the sequence is PRKPPSSFLL…KYFEEQEAYR (69 aa).

Belongs to the HMGB family. As to expression, expressed in adult germ cells (at protein level).

It localises to the nucleus. The protein localises to the chromosome. The sequence is that of High mobility group protein B4 (Hmgb4) from Mus musculus (Mouse).